The chain runs to 179 residues: MAKLHDYYKSSVVAELTKQFSYTSVMQVPRIEKITLNMGVGEAINDKKLLENAASDMATISGQKPLITKARKSVAGFKIREGYPIGCKVTLRGERMWDFLERLINIALPRVRDFRGVSAKSFDGRGNYSMGVREQIIFPEIDFDKVDRVRGLDITITTSAGTDEEGRALLAAFNFPFRK.

It belongs to the universal ribosomal protein uL5 family. As to quaternary structure, part of the 50S ribosomal subunit; part of the 5S rRNA/L5/L18/L25 subcomplex. Contacts the 5S rRNA and the P site tRNA. Forms a bridge to the 30S subunit in the 70S ribosome.

Functionally, this is one of the proteins that bind and probably mediate the attachment of the 5S RNA into the large ribosomal subunit, where it forms part of the central protuberance. In the 70S ribosome it contacts protein S13 of the 30S subunit (bridge B1b), connecting the 2 subunits; this bridge is implicated in subunit movement. Contacts the P site tRNA; the 5S rRNA and some of its associated proteins might help stabilize positioning of ribosome-bound tRNAs. The polypeptide is Large ribosomal subunit protein uL5 (Vibrio parahaemolyticus serotype O3:K6 (strain RIMD 2210633)).